We begin with the raw amino-acid sequence, 298 residues long: Zinc transport system membrane protein TroC (298 aa).

8 consecutive transmembrane segments (helical) span residues 16-36 (VVLG…FAVL), 41-61 (LFGD…FLLT), 68-88 (ILLL…LMVM), 97-117 (GAQG…LTHV), 144-164 (VLLI…FWKE), 187-207 (FMLT…VGVI), 229-249 (VLCA…SVVS), and 255-275 (LSTG…SIML).

It belongs to the ABC-3 integral membrane protein family.

Its subcellular location is the cell membrane. Part of an ATP-driven transport system TroABCD for zinc. The chain is Zinc transport system membrane protein TroC (troC) from Treponema pallidum (strain Nichols).